Here is a 1010-residue protein sequence, read N- to C-terminus: 2-oxoglutarate dehydrogenase-like, mitochondrial (1010 aa).

The N-terminal 107 residues, 1–107 (MSQLRLLLFR…RASVSSCTKT (107 aa)), are a transit peptide targeting the mitochondrion. The tract at residues 28–47 (GGRRRSSGPPTTIPRSRGGV) is disordered. The Ca(2+) site is built by histidine 130, aspartate 143, and aspartate 145. Thiamine diphosphate-binding residues include arginine 299, aspartate 398, asparagine 431, isoleucine 433, and glutamine 663. Mg(2+)-binding residues include aspartate 398, asparagine 431, and isoleucine 433.

It belongs to the alpha-ketoglutarate dehydrogenase family. In terms of assembly, the OGDHC complex comprises multiple copies of three catalytic enzyme components, the 2-oxoglutarate dehydrogenase (OGDH/E1), the dihydrolipoamide dehydrogenase (DLST/E2) and the dihydrolipoamide dehydrogenase (DLD/E3). OGDHL/E1-like isoenzyme may replace OGDH in the OGDHC complex in the brain. The presence of either ODGH/E1 or ODGHL/E1-like isoenzyme in the complex may depend on its tissular distribution. Thiamine diphosphate serves as cofactor. The cofactor is Mg(2+). In terms of tissue distribution, the OGDHL-containing OGDHC complex is present in the brain, but not in the heart.

It is found in the mitochondrion matrix. The catalysed reaction is N(6)-[(R)-lipoyl]-L-lysyl-[protein] + 2-oxoglutarate + H(+) = N(6)-[(R)-S(8)-succinyldihydrolipoyl]-L-lysyl-[protein] + CO2. Functionally, 2-oxoglutarate dehydrogenase (E1-like) component of the 2-oxoglutarate dehydrogenase multienzyme complex (OGDHC) which mediates the decarboxylation of alpha-ketoglutarate in the tricarboxylic acid cycle. The OGDHC complex catalyzes the overall conversion of 2-oxoglutarate to succinyl-CoA and CO(2) while reducing NAD(+) to NADH. The OGDHC complex is mainly active in the mitochondrion. Involved in the inhibition of cell proliferation and in apoptosis. The protein is 2-oxoglutarate dehydrogenase-like, mitochondrial of Rattus norvegicus (Rat).